Reading from the N-terminus, the 302-residue chain is GTP cyclohydrolase FolE2 (302 aa).

This sequence belongs to the GTP cyclohydrolase IV family.

It carries out the reaction GTP + H2O = 7,8-dihydroneopterin 3'-triphosphate + formate + H(+). It participates in cofactor biosynthesis; 7,8-dihydroneopterin triphosphate biosynthesis; 7,8-dihydroneopterin triphosphate from GTP: step 1/1. Functionally, converts GTP to 7,8-dihydroneopterin triphosphate. The polypeptide is GTP cyclohydrolase FolE2 (Pseudoalteromonas translucida (strain TAC 125)).